Consider the following 568-residue polypeptide: Protein NDNF (568 aa).

An N-terminal signal peptide occupies residues 1–19; sequence MELFYWCLLCLLLPLTSRT. Fibronectin type-III domains are found at residues 261 to 331 and 445 to 564; these read NLGK…VGAF and PSLP…IVKT. 2 N-linked (GlcNAc...) asparagine glycosylation sites follow: N322 and N488.

In terms of assembly, binds heparin and chondroitin sulfate. O-glycosylated; contains heparan sulfate and chondroitin sulfate. Post-translationally, N-glycosylated. Expressed in brain and spinal cord with no expression detected in heart, kidney or liver. Expressed by neurons but not by astrocytes. In the brain, detected in the cerebrum, cerebellum and olfactory bulbs. In the cerebral cortex, highly expressed in Cajal-Retzius cells. Also expressed in hippocampal neurons and in Purkinje and granule cells of the cerebellum (at protein level). Expressed in neurons along the GnRH migratory route.

The protein localises to the secreted. In terms of biological role, secretory protein that plays a role in various cellular processes. Acts as a chemorepellent acting on gonadotropin-releasing hormone (GnRH) expressing neurons regulating their migration to the hypothalamus. Also promotes neuron migration, growth and survival as well as neurite outgrowth and is involved in the development of the olfactory system. May also act through the regulation of growth factors activity and downstream signaling. Also regulates extracellular matrix assembly and cell adhesiveness. Promotes endothelial cell survival, vessel formation and plays an important role in the process of revascularization through NOS3-dependent mechanisms. This is Protein NDNF (Ndnf) from Mus musculus (Mouse).